We begin with the raw amino-acid sequence, 130 residues long: Small ribosomal subunit protein uS11 (130 aa).

Belongs to the universal ribosomal protein uS11 family. As to quaternary structure, part of the 30S ribosomal subunit. Interacts with proteins S7 and S18. Binds to IF-3.

In terms of biological role, located on the platform of the 30S subunit, it bridges several disparate RNA helices of the 16S rRNA. Forms part of the Shine-Dalgarno cleft in the 70S ribosome. The protein is Small ribosomal subunit protein uS11 of Syntrophobacter fumaroxidans (strain DSM 10017 / MPOB).